The primary structure comprises 252 residues: Probable transcriptional regulatory protein Ava_1228 (252 aa).

Belongs to the TACO1 family.

Its subcellular location is the cytoplasm. This chain is Probable transcriptional regulatory protein Ava_1228, found in Trichormus variabilis (strain ATCC 29413 / PCC 7937) (Anabaena variabilis).